The chain runs to 184 residues: Fruit protein pKIWI501 (184 aa).

The disordered stretch occupies residues M1–E184. Composition is skewed to low complexity over residues P25–A36 and P53–T65. Residues E72 to V92 are compositionally biased toward acidic residues. Basic and acidic residues predominate over residues A96–E119. Low complexity predominate over residues A120–G156. Basic and acidic residues predominate over residues P159–E168.

This sequence to H.brasiliensis latex allergen Hev b 5.

The polypeptide is Fruit protein pKIWI501 (Actinidia deliciosa (Kiwi)).